The sequence spans 490 residues: (21S)-21-acetyl-1-hydroxy-apo-melianone synthase CYP88A164 (490 aa).

The chain crosses the membrane as a helical span at residues 4 to 24 (DLLWLILAIVVGTYVVLFGFL). Cys-438 provides a ligand contact to heme.

The protein belongs to the cytochrome P450 family. Heme is required as a cofactor. In terms of tissue distribution, mainly expressed in petioles and, to a lower extent, in roots.

Its subcellular location is the membrane. It carries out the reaction (21S)-21-acetoxyl-apo-melianone + reduced [NADPH--hemoprotein reductase] + O2 = (21S)-21-acetyl-1-hydroxy-apo-melianone + oxidized [NADPH--hemoprotein reductase] + H2O + H(+). Its pathway is secondary metabolite biosynthesis; terpenoid biosynthesis. Its function is as follows. Monooxygenase involved in the biosynthesis of limonoids triterpene natural products such as azadirachtin, an antifeedant widely used as bioinsecticide, and possessing many medicinal applications including anti-tumoral, anti-malarial, anti-rheumatic, antibacterial, anti-inflammatory, anti-pyretic and diuretic effects. Catalyzes the conversion of (21S)-21-acetoxyl-apo-melianone to (21S)-21-acetyl-1-hydroxy-apo-melianone. This Melia azedarach (Chinaberry tree) protein is (21S)-21-acetyl-1-hydroxy-apo-melianone synthase CYP88A164.